Reading from the N-terminus, the 79-residue chain is Crassicorin-I (79 aa).

Residues 1–19 form the signal peptide; sequence MKLFLVSIVLVGMLVLAAA. Residues 20-39 constitute a propeptide that is removed on maturation; it reads RPERDIDSFDEQEEKGFVKR. 3 disulfides stabilise this stretch: Cys43-Cys76, Cys45-Cys69, and Cys59-Cys77.

It belongs to the sea anemone type 3 (BDS) potassium channel toxin family. Highly expressed by the mesenteries. Moderately expressed by the pharynx. Weakly expressed by the gonad and pedal disk. No expression in tentacle.

Its subcellular location is the secreted. It is found in the nematocyst. Functionally, peptide with both antimicrobial and neurotoxin activities. Cationic AMP with antibacterial activity against both Gram-positive bacteria (B.subtilis, MIC=11.49 ug/mL) and Gram-negative bacteria (E.coli (MIC=12.21 ug/mL) and S.enterica (MIC=11.95 ug/mL)). Shows no significant antimicrobial activity against bacteria S.aureus and P.aeruginosa, as well as the fungus C.albicans. In vivo, induces reversible paralytic activity towards the shrimp P.paucidens. May act by impairing sodium or potassium channels in the prey. This is Crassicorin-I from Urticina crassicornis (Mottled anemone).